We begin with the raw amino-acid sequence, 208 residues long: Probable nicotinate-nucleotide adenylyltransferase (208 aa).

The protein belongs to the NadD family.

The catalysed reaction is nicotinate beta-D-ribonucleotide + ATP + H(+) = deamido-NAD(+) + diphosphate. It participates in cofactor biosynthesis; NAD(+) biosynthesis; deamido-NAD(+) from nicotinate D-ribonucleotide: step 1/1. In terms of biological role, catalyzes the reversible adenylation of nicotinate mononucleotide (NaMN) to nicotinic acid adenine dinucleotide (NaAD). In Kineococcus radiotolerans (strain ATCC BAA-149 / DSM 14245 / SRS30216), this protein is Probable nicotinate-nucleotide adenylyltransferase.